The chain runs to 120 residues: Chaperonin GroEL (120 aa).

23 to 27 contacts ATP; it reads DGTTT.

This sequence belongs to the chaperonin (HSP60) family. As to quaternary structure, forms a cylinder of 14 subunits composed of two heptameric rings stacked back-to-back. Interacts with the co-chaperonin GroES.

The protein localises to the cytoplasm. The enzyme catalyses ATP + H2O + a folded polypeptide = ADP + phosphate + an unfolded polypeptide.. Its function is as follows. Together with its co-chaperonin GroES, plays an essential role in assisting protein folding. The GroEL-GroES system forms a nano-cage that allows encapsulation of the non-native substrate proteins and provides a physical environment optimized to promote and accelerate protein folding. The sequence is that of Chaperonin GroEL from Mycobacterium shimoidei.